Consider the following 326-residue polypeptide: DNA-directed RNA polymerase subunit alpha (326 aa).

The tract at residues 1–231 (MQTALLKPKI…DQLSVFAALE (231 aa)) is alpha N-terminal domain (alpha-NTD). Residues 247 to 326 (IDPILLRPVD…ENWPPAGLEK (80 aa)) form an alpha C-terminal domain (alpha-CTD) region.

The protein belongs to the RNA polymerase alpha chain family. Homodimer. The RNAP catalytic core consists of 2 alpha, 1 beta, 1 beta' and 1 omega subunit. When a sigma factor is associated with the core the holoenzyme is formed, which can initiate transcription.

It carries out the reaction RNA(n) + a ribonucleoside 5'-triphosphate = RNA(n+1) + diphosphate. Functionally, DNA-dependent RNA polymerase catalyzes the transcription of DNA into RNA using the four ribonucleoside triphosphates as substrates. This Cupriavidus metallidurans (strain ATCC 43123 / DSM 2839 / NBRC 102507 / CH34) (Ralstonia metallidurans) protein is DNA-directed RNA polymerase subunit alpha.